A 403-amino-acid chain; its full sequence is Coenzyme A biosynthesis bifunctional protein CoaBC (403 aa).

The tract at residues 1 to 197 (MLHHVKLIYA…LHPKSLEGKR (197 aa)) is phosphopantothenoylcysteine decarboxylase. The segment at 198–403 (VLVTAGATRE…RLWDEIEKML (206 aa)) is phosphopantothenate--cysteine ligase. Positions 287, 297, and 330 each coordinate CTP.

This sequence in the N-terminal section; belongs to the HFCD (homo-oligomeric flavin containing Cys decarboxylase) superfamily. It in the C-terminal section; belongs to the PPC synthetase family. The cofactor is Mg(2+). Requires FMN as cofactor.

The catalysed reaction is N-[(R)-4-phosphopantothenoyl]-L-cysteine + H(+) = (R)-4'-phosphopantetheine + CO2. The enzyme catalyses (R)-4'-phosphopantothenate + L-cysteine + CTP = N-[(R)-4-phosphopantothenoyl]-L-cysteine + CMP + diphosphate + H(+). It functions in the pathway cofactor biosynthesis; coenzyme A biosynthesis. Its function is as follows. Catalyzes two sequential steps in the biosynthesis of coenzyme A. In the first step cysteine is conjugated to 4'-phosphopantothenate to form 4-phosphopantothenoylcysteine. In the second step the latter compound is decarboxylated to form 4'-phosphopantotheine. This is Coenzyme A biosynthesis bifunctional protein CoaBC from Thermococcus kodakarensis (strain ATCC BAA-918 / JCM 12380 / KOD1) (Pyrococcus kodakaraensis (strain KOD1)).